The sequence spans 471 residues: Ribulose bisphosphate carboxylase large chain (471 aa).

Substrate-binding residues include asparagine 119 and threonine 169. Residue lysine 171 is the Proton acceptor of the active site. Lysine 173 serves as a coordination point for substrate. 3 residues coordinate Mg(2+): lysine 197, aspartate 199, and glutamate 200. Position 197 is an N6-carboxylysine (lysine 197). Histidine 290 (proton acceptor) is an active-site residue. The substrate site is built by arginine 291, histidine 323, and serine 375.

This sequence belongs to the RuBisCO large chain family. Type I subfamily. As to quaternary structure, heterohexadecamer of 8 large chains and 8 small chains; disulfide-linked. The disulfide link is formed within the large subunit homodimers. Mg(2+) is required as a cofactor. Post-translationally, the disulfide bond which can form in the large chain dimeric partners within the hexadecamer appears to be associated with oxidative stress and protein turnover.

It localises to the carboxysome. The enzyme catalyses 2 (2R)-3-phosphoglycerate + 2 H(+) = D-ribulose 1,5-bisphosphate + CO2 + H2O. The catalysed reaction is D-ribulose 1,5-bisphosphate + O2 = 2-phosphoglycolate + (2R)-3-phosphoglycerate + 2 H(+). Functionally, ruBisCO catalyzes two reactions: the carboxylation of D-ribulose 1,5-bisphosphate, the primary event in carbon dioxide fixation, as well as the oxidative fragmentation of the pentose substrate in the photorespiration process. Both reactions occur simultaneously and in competition at the same active site. The chain is Ribulose bisphosphate carboxylase large chain from Crocosphaera subtropica (strain ATCC 51142 / BH68) (Cyanothece sp. (strain ATCC 51142)).